The chain runs to 190 residues: RRP15-like protein (190 aa).

The span at 1 to 11 (MSTKNRDRLVV) shows a compositional bias: basic and acidic residues. Disordered stretches follow at residues 1 to 69 (MSTK…TRKE) and 119 to 190 (QKTM…SDED). The segment covering 55–66 (QRKKKKVIKKLT) has biased composition (basic residues). The stretch at 59–84 (KKVIKKLTRKEQSLKHSVKEYRIKLA) forms a coiled coil. Positions 119–153 (QKTMSDAVKEKMTARDRKEARERFDGKNFDSDKFA) are enriched in basic and acidic residues. Residues 167–190 (GEEEDEQMNIGDDEIDAGNYSDED) show a composition bias toward acidic residues.

It belongs to the RRP15 family.

This chain is RRP15-like protein, found in Caenorhabditis briggsae.